The sequence spans 330 residues: Fructose-1,6-bisphosphatase class 1 (330 aa).

Mg(2+)-binding residues include E84, D103, L105, and D106. Residues 106–109, N196, and K262 each bind substrate; that span reads DGSS. E268 serves as a coordination point for Mg(2+).

This sequence belongs to the FBPase class 1 family. In terms of assembly, homotetramer. It depends on Mg(2+) as a cofactor.

Its subcellular location is the cytoplasm. It carries out the reaction beta-D-fructose 1,6-bisphosphate + H2O = beta-D-fructose 6-phosphate + phosphate. The protein operates within carbohydrate biosynthesis; gluconeogenesis. The polypeptide is Fructose-1,6-bisphosphatase class 1 (Shewanella sp. (strain MR-7)).